A 369-amino-acid chain; its full sequence is Nuclear pore complex-interacting protein family member A7 (369 aa).

Positions 151–171 (SMKEREHREEERQVSEAEENG) are disordered.

The protein belongs to the NPIP family.

The polypeptide is Nuclear pore complex-interacting protein family member A7 (NPIPA7) (Homo sapiens (Human)).